We begin with the raw amino-acid sequence, 263 residues long: Microtubule-associated protein RP/EB family member 1 (263 aa).

Positions Asn14–Asp116 constitute a Calponin-homology (CH) domain. The tract at residues Lys150 to Ala182 is disordered. One can recognise an EB1 C-terminal domain in the interval Lys180 to Ile250.

This sequence belongs to the MAPRE family.

The protein localises to the cytoplasm. The protein resides in the cytoskeleton. It localises to the microtubule organizing center. Its subcellular location is the centrosome. It is found in the golgi apparatus. The protein localises to the spindle. The protein resides in the spindle pole. Its function is as follows. Plus-end tracking protein (+TIP) that binds to the plus-end of microtubules and regulates the dynamics of the microtubule cytoskeleton. Promotes cytoplasmic microtubule nucleation and elongation. Involved in mitotic spindle positioning by stabilizing microtubules and promoting dynamic connection between astral microtubules and the cortex during mitotic chromosome segregation. The polypeptide is Microtubule-associated protein RP/EB family member 1 (MAPRE1) (Coturnix japonica (Japanese quail)).